A 285-amino-acid chain; its full sequence is RVSIPSVSKEHNRANAIFSRMGYVNFTDDETIWDDNDDDETIWDNSTESTKPSDEFFRVVGGEDAKPGQFPWQVLLNGETEAFCGGSIVNEKWIVTAAHCILPGIKIEVVAGKHNIEKKEDTEQRRNVTQIILHHSYNASFNKYSHDIALLELDKPLSLNSYVTPICIANREYTNIFLKFGAGYVSGWGKLFSQGRTASILQYLRVPLVDRATCLRSTKFTIYNNMFCAGFHEGGRDSCQGDSGGPHVTEVEGTNFLTGIISWGEECAMKGKYGIYTKVSRYVNW.

Y23 carries the post-translational modification Sulfotyrosine. An N-linked (GlcNAc...) asparagine glycan is attached at N25. T27 is modified (phosphothreonine; alternate). An O-linked (GalNAc...) threonine; alternate glycan is attached at T27. N45 is a glycosylation site (N-linked (GlcNAc...) asparagine). O-linked (GalNAc...) threonine glycosylation is present at T47. The Peptidase S1 domain occupies 59-285; the sequence is VVGGEDAKPG…YTKVSRYVNW (227 aa). A disulfide bond links C84 and C100. H99 acts as the Charge relay system in catalysis. 3 residues coordinate Ca(2+): N115, E120, and E123. Residues N127 and N138 are each glycosylated (N-linked (GlcNAc...) asparagine). D147 (charge relay system) is an active-site residue. Intrachain disulfides connect C214–C228 and C239–C267. Residue S243 is the Charge relay system of the active site.

This sequence belongs to the peptidase S1 family. In terms of assembly, heterodimer of a light chain and a heavy chain; disulfide-linked. Interacts (inactive and activated) with F11 (activated) in calcium-dependent manner. Interacts with SERPINC1. Activated by factor XIa, which excises the activation peptide. The propeptide can also be removed by snake venom protease. Activated by coagulation factor VIIa-tissue factor (F7-F3) complex in calcium-dependent manner.

The protein localises to the secreted. The catalysed reaction is Selective cleavage of Arg-|-Ile bond in factor X to form factor Xa.. In terms of biological role, factor IX is a vitamin K-dependent plasma protein that participates in the intrinsic pathway of blood coagulation by converting factor X to its active form in the presence of Ca(2+) ions, phospholipids, and factor VIIIa. In Cavia porcellus (Guinea pig), this protein is Coagulation factor IX (F9).